We begin with the raw amino-acid sequence, 454 residues long: Putative flavin-containing monoamine oxidase AofH (454 aa).

It belongs to the flavin monoamine oxidase family. The cofactor is FAD.

The chain is Putative flavin-containing monoamine oxidase AofH (aofH) from Mycobacterium tuberculosis (strain CDC 1551 / Oshkosh).